The following is a 1858-amino-acid chain: Protein ROS1C (1858 aa).

The segment covering 347–356 (TEALKGEDAP) has biased composition (basic and acidic residues). 2 disordered regions span residues 347–416 (TEAL…AEPF) and 1288–1309 (PDTA…KNSE). Basic residues-rich tracts occupy residues 360 to 370 (LKTRRRKHRPK) and 394 to 404 (KPKRKYVRKNR). [4Fe-4S] cluster-binding residues include C1492, C1499, C1502, and C1508.

Belongs to the DNA glycosylase family. DEMETER subfamily. [4Fe-4S] cluster serves as cofactor. Expressed in pistils and immature seeds. Expressed a low levels in roots, leaves and anthers.

The protein localises to the nucleus. Bifunctional DNA glycosylase/lyase, which excises 5-methylcytosine (5-meC) and 5-hydroxymethylcytosine (5-hmeC), leaving an apyrimidinic (AP) site that is subsequently incised by the lyase activity. Is responsible for the demethylation of methylated cytosine residues of Tos17 retrotransposon DNA. Demethylation of Tos17 cytosine residues promotes its transposition. May be involved in seed development. This chain is Protein ROS1C, found in Oryza sativa subsp. japonica (Rice).